Reading from the N-terminus, the 460-residue chain is Argininosuccinate lyase (460 aa).

It belongs to the lyase 1 family. Argininosuccinate lyase subfamily.

It localises to the cytoplasm. It carries out the reaction 2-(N(omega)-L-arginino)succinate = fumarate + L-arginine. Its pathway is amino-acid biosynthesis; L-arginine biosynthesis; L-arginine from L-ornithine and carbamoyl phosphate: step 3/3. The protein is Argininosuccinate lyase of Nitratidesulfovibrio vulgaris (strain ATCC 29579 / DSM 644 / CCUG 34227 / NCIMB 8303 / VKM B-1760 / Hildenborough) (Desulfovibrio vulgaris).